A 389-amino-acid chain; its full sequence is Probable dual-specificity RNA methyltransferase RlmN (389 aa).

A disordered region spans residues 1–23 (MTTQHPDTPETGITPGGTSGAFR). Catalysis depends on Glu-127, which acts as the Proton acceptor. The Radical SAM core domain maps to 133 to 376 (YPTRTTLCIS…ATLRDTRGQD (244 aa)). Cysteines 140 and 381 form a disulfide. Cys-147, Cys-151, and Cys-154 together coordinate [4Fe-4S] cluster. S-adenosyl-L-methionine-binding positions include 202–203 (GE), Ser-236, 259–261 (SLH), and Asn-338. Cys-381 acts as the S-methylcysteine intermediate in catalysis.

Belongs to the radical SAM superfamily. RlmN family. Requires [4Fe-4S] cluster as cofactor.

Its subcellular location is the cytoplasm. The enzyme catalyses adenosine(2503) in 23S rRNA + 2 reduced [2Fe-2S]-[ferredoxin] + 2 S-adenosyl-L-methionine = 2-methyladenosine(2503) in 23S rRNA + 5'-deoxyadenosine + L-methionine + 2 oxidized [2Fe-2S]-[ferredoxin] + S-adenosyl-L-homocysteine. It carries out the reaction adenosine(37) in tRNA + 2 reduced [2Fe-2S]-[ferredoxin] + 2 S-adenosyl-L-methionine = 2-methyladenosine(37) in tRNA + 5'-deoxyadenosine + L-methionine + 2 oxidized [2Fe-2S]-[ferredoxin] + S-adenosyl-L-homocysteine. Specifically methylates position 2 of adenine 2503 in 23S rRNA and position 2 of adenine 37 in tRNAs. This Bifidobacterium longum (strain NCC 2705) protein is Probable dual-specificity RNA methyltransferase RlmN.